Here is a 62-residue protein sequence, read N- to C-terminus: Photosystem II reaction center protein Z (62 aa).

A run of 2 helical transmembrane segments spans residues 8–28 (AIFA…VVFA) and 41–61 (FSGT…NSLI).

The protein belongs to the PsbZ family. In terms of assembly, PSII is composed of 1 copy each of membrane proteins PsbA, PsbB, PsbC, PsbD, PsbE, PsbF, PsbH, PsbI, PsbJ, PsbK, PsbL, PsbM, PsbT, PsbY, PsbZ, Psb30/Ycf12, at least 3 peripheral proteins of the oxygen-evolving complex and a large number of cofactors. It forms dimeric complexes.

It localises to the plastid. The protein localises to the chloroplast thylakoid membrane. In terms of biological role, may control the interaction of photosystem II (PSII) cores with the light-harvesting antenna, regulates electron flow through the 2 photosystem reaction centers. PSII is a light-driven water plastoquinone oxidoreductase, using light energy to abstract electrons from H(2)O, generating a proton gradient subsequently used for ATP formation. The sequence is that of Photosystem II reaction center protein Z from Acorus gramineus (Dwarf sweet flag).